A 273-amino-acid polypeptide reads, in one-letter code: Undecaprenyl-diphosphatase (273 aa).

Transmembrane regions (helical) follow at residues 6 to 26 (SLLI…LPVS), 45 to 65 (AKTF…VMFW), 90 to 110 (LTLI…LLFH), 116 to 136 (LFNP…LIAA), 190 to 210 (YAAS…ATAL), 222 to 242 (GDIP…LIAI), and 252 to 272 (ISFI…YVVF).

The protein belongs to the UppP family.

The protein localises to the cell inner membrane. It catalyses the reaction di-trans,octa-cis-undecaprenyl diphosphate + H2O = di-trans,octa-cis-undecaprenyl phosphate + phosphate + H(+). Catalyzes the dephosphorylation of undecaprenyl diphosphate (UPP). Confers resistance to bacitracin. This chain is Undecaprenyl-diphosphatase, found in Escherichia coli O7:K1 (strain IAI39 / ExPEC).